A 960-amino-acid chain; its full sequence is MAEVEAGAALELRGLPPEIPDELITLYFENHRRSGGGLLLSWQRLGCGGVLIFQDPADAKRVLAQAEHRLHGVRLSLRPAPPRAPERVLLQHLPPGTSPLSLEQHVQALLGAAGHPVQTCHALASPRQDCALVQLSTPLSEAEVSALAEQARNLPLNGATVSLAWVPQTRAVRVVDSASPVDLLLLELYLENERRSGGGPLEGLRSLPGQLGTVISFQQWQVAERVLKQKHWLQGIELSLVPHYDVLEPEALAEGVSGRDHSATQESGVIGHAPTGTGGLAGALTMAVGSGEAPQQLGTLLRAGPVGAPGQALPVDSGSIRIQGSMGSTSPVDPVESSTELPEQVGPMASDSVGVQEQEGLGEVATGQEGLMGLVGTAMESVETGLESPGYGEMQKQEGLVEMVMSVEPGAVRYLQLYYEDLLASLEDVALFPLEGTDVTGFRLCGARAPCQAAQELLQSLLGSISCHTLNMKHPGSARFLLGVEGQHLLHRLEAQFQCVFGTEHLASATLDIDPERTDPTEALQVLHGHITGIDQESLRLEDVRELLATLESPHGGEDRVPLEMEKEKPGGPGETVVEQQEEIPTLEAEEEPVALSTGARGQLEEEATLQLAIHRSLESQSQVADQQEANALRRAMALSLLEAEEALDEDTGGEAQLVVHTSFEQDVDELNQALSNALEAHLREETVSLQGRMLPPELGARLERCHDVSATLRGDRVVLRGFGVQPARAARHLAALLVDPWDQNLTFPLEASKPNLSEQGLKEPLGRLEALEENSQEFQDVVRAFYSTLDAVHGRIRIVRVERVSHPLLQQQYQLHRERLMQSCQQRPVEQVLYHGTSESAVLDICAHGFNRSFCGRNGTLYGQGVYFAKRASLSVLDRYSPPNAEGYKAVFVAQVLTGDYGQGSRGLKAPPLRVSGQVLRYDSAVDCLQQPRIFVIFHDTQALPTHLITCKNILPGTP.

At E103 the chain carries ADP-ribosyl glutamic acid. A compositionally biased stretch (polar residues) spans 325 to 341 (SMGSTSPVDPVESSTEL). The segment at 325–346 (SMGSTSPVDPVESSTELPEQVG) is disordered. Phosphoserine is present on residues S381 and S388. Residues 553 to 576 (SPHGGEDRVPLEMEKEKPGGPGET) are disordered. Residues 555-570 (HGGEDRVPLEMEKEKP) show a composition bias toward basic and acidic residues. A Ubiquitin-interacting motif is present at residues 604 to 621 (LEEEATLQLAIHRSLESQ). S617 bears the Phosphoserine mark. Residues 649-856 (DEDTGGEAQL…CAHGFNRSFC (208 aa)) form a myc binding region. The PARP catalytic domain occupies 755–960 (PNLSEQGLKE…TCKNILPGTP (206 aa)). Positions 780-787 (QDVVRAFY) match the PIP-box motif. Residue E831 is modified to ADP-ribosyl glutamic acid.

Belongs to the ARTD/PARP family. As to quaternary structure, interacts with MYC. Interacts with PARP14. Interacts (via-PIP box and ubiquitin-interacting motifs) with PCNA. In terms of processing, stimulated through its phosphorylation by CDK2. Acquires CDK-dependent phosphorylation through late-G1 to S phase, and from prometaphase to cytokinesis in the nucleolar organizing regions. Phosphorylation is suppressed in growth-arrested cells. Auto-mono-ADP-ribosylated on glutamate and lysine residues.

It localises to the cytoplasm. The protein resides in the nucleus. The enzyme catalyses L-lysyl-[protein] + NAD(+) = N(6)-(ADP-D-ribosyl)-L-lysyl-[protein] + nicotinamide + H(+). It carries out the reaction L-aspartyl-[protein] + NAD(+) = 4-O-(ADP-D-ribosyl)-L-aspartyl-[protein] + nicotinamide. The catalysed reaction is L-glutamyl-[protein] + NAD(+) = 5-O-(ADP-D-ribosyl)-L-glutamyl-[protein] + nicotinamide. In terms of biological role, ADP-ribosyltransferase that mediates mono-ADP-ribosylation of glutamate and aspartate residues on target proteins. In contrast to PARP1 and PARP2, it is not able to mediate poly-ADP-ribosylation. Catalyzes mono-ADP-ribosylation of GSK3B, leading to negatively regulate GSK3B kinase activity. Involved in translesion DNA synthesis in response to DNA damage via its interaction with PCNA. The chain is Protein mono-ADP-ribosyltransferase PARP10 from Mus musculus (Mouse).